The primary structure comprises 318 residues: MWLPLLLGALLWAVLWLLRDRQSLPASNAFVFITGCDSGFGRLLALQLDQRGFRVLASCLTPSGAEDLQRVASSRLHTTLLDITDPQSVQQAAKWVEMHVKEAGLFGLVNNAGVAGIIGPTPWLTRDDFQRVLNVNTMGPIGVTLALLPLLQQARGRVINITSVLGRLAANGGGYCVSKFGLEAFSDSLRRDVAHFGIRVSIVEPGFFRTPVTNLESLEKTLQACWARLPPATQAHYGGAFLTKYLKMQQRIMNLICDPDLTKVSRCLEHALTARHPRTRYSPGWDAKLLWLPASYLPASLVDAVLTWVLPKPAQAVY.

The chain crosses the membrane as a helical span at residues 1–21 (MWLPLLLGALLWAVLWLLRDR). Topologically, residues 22-288 (QSLPASNAFV…TRYSPGWDAK (267 aa)) are lumenal. 32-56 (FITGCDSGFGRLLALQLDQRGFRVL) is a binding site for NADP(+). Asn160 is a glycosylation site (N-linked (GlcNAc...) asparagine). Substrate is bound at residue Ser163. Catalysis depends on Tyr175, which acts as the Proton acceptor. A helical transmembrane segment spans residues 289 to 309 (LLWLPASYLPASLVDAVLTWV). Residues 310-318 (LPKPAQAVY) are Cytoplasmic-facing.

The protein belongs to the short-chain dehydrogenases/reductases (SDR) family. As to quaternary structure, homodimer. Widely expressed. In the eye, abundant in the retinal pigment epithelium.

The protein localises to the endoplasmic reticulum membrane. The catalysed reaction is 11-cis-retinol + NAD(+) = 11-cis-retinal + NADH + H(+). The enzyme catalyses 9-cis-retinol + NAD(+) = 9-cis-retinal + NADH + H(+). It carries out the reaction 13-cis-retinol + NAD(+) = 13-cis-retinal + NADH + H(+). It catalyses the reaction androsterone + NAD(+) = 5alpha-androstan-3,17-dione + NADH + H(+). The catalysed reaction is 5alpha-androstane-3alpha,17beta-diol + NAD(+) = 17beta-hydroxy-5alpha-androstan-3-one + NADH + H(+). It functions in the pathway cofactor metabolism; retinol metabolism. Its activity is regulated as follows. Inhibited by 9-cis-, 13-cis- and all-trans-retinoic acids, with the most potent inhibitor being 13-cis-retinoic acid. Weakly inhibited by oleic acid. Its function is as follows. Catalyzes the oxidation of cis-isomers of retinol, including 11-cis-, 9-cis-, and 13-cis-retinol in an NAD-dependent manner. Has no activity towards all-trans retinal. Plays a significant role in 11-cis retinol oxidation in the retinal pigment epithelium cells (RPE). Also recognizes steroids (androsterone, androstanediol) as its substrates. In Homo sapiens (Human), this protein is Retinol dehydrogenase 5.